The chain runs to 499 residues: NAD(P)H-quinone oxidoreductase chain 4, chloroplastic (499 aa).

The next 14 helical transmembrane spans lie at 4–24 (LPWL…IPLF), 31–51 (MIRW…TYIF), 87–107 (IGLI…AWPV), 113–130 (LLHF…GLFA), 134–154 (ILLF…LLSM), 167–187 (FLLY…SMGL), 211–231 (ILLY…FPLH), 242–262 (HYST…YGLI), 274–294 (SLFS…AALT), 305–325 (IAYS…SMTY), 330–350 (GAIL…FLVG), 386–406 (LALP…GVIT), 416–436 (IIIT…LLSM), and 462–482 (LFIL…PDLV).

The protein belongs to the complex I subunit 4 family.

The protein localises to the plastid. It localises to the chloroplast thylakoid membrane. It carries out the reaction a plastoquinone + NADH + (n+1) H(+)(in) = a plastoquinol + NAD(+) + n H(+)(out). The enzyme catalyses a plastoquinone + NADPH + (n+1) H(+)(in) = a plastoquinol + NADP(+) + n H(+)(out). The polypeptide is NAD(P)H-quinone oxidoreductase chain 4, chloroplastic (Cryptomeria japonica (Japanese cedar)).